The chain runs to 314 residues: Epithelial-stromal interaction protein 1 (314 aa).

4 disordered regions span residues 1-72 (MYPR…PNET), 200-219 (NRSACNIAPPAAQSSRWKLP), 225-267 (PSRA…HQEE), and 292-314 (SQPGGVEQSGGCWNMNSTDGWGI). Residues 43–58 (AEPKGPKLERQGHGDQ) show a composition bias toward basic and acidic residues. Residues 71–180 (ETRRQKIQRI…QEDIRRATLR (110 aa)) are a coiled coil. The segment covering 232–267 (AHKDSPQKEDNQKLQKTRDGHQKNKLLETKGQHQEE) has biased composition (basic and acidic residues). Positions 305–314 (NMNSTDGWGI) are enriched in polar residues.

Plays a role in M1 macrophage polarization and is required for the proper regulation of gene expression during M1 versus M2 macrophage differentiation. Might play a role in RELA/p65 and STAT1 phosphorylation and nuclear localization upon activation of macrophages. The sequence is that of Epithelial-stromal interaction protein 1 (Epsti1) from Rattus norvegicus (Rat).